The following is a 166-amino-acid chain: Large ribosomal subunit protein mL49 (166 aa).

Positions 56 to 78 (RIPDPPKHEHYPTPSGWQPPRDP) are disordered.

The protein belongs to the mitochondrion-specific ribosomal protein mL49 family. In terms of assembly, component of the mitochondrial large ribosomal subunit (mt-LSU). Mature mammalian 55S mitochondrial ribosomes consist of a small (28S) and a large (39S) subunit. The 28S small subunit contains a 12S ribosomal RNA (12S mt-rRNA) and 30 different proteins. The 39S large subunit contains a 16S rRNA (16S mt-rRNA), a copy of mitochondrial valine transfer RNA (mt-tRNA(Val)), which plays an integral structural role, and 52 different proteins. Interacts with OXA1L. In terms of tissue distribution, ubiquitous.

The protein localises to the mitochondrion. The sequence is that of Large ribosomal subunit protein mL49 (MRPL49) from Homo sapiens (Human).